Reading from the N-terminus, the 129-residue chain is Fluoride-specific ion channel FluC (129 aa).

Helical transmembrane passes span 6–26 (ILAI…FNGI), 35–55 (IPFG…ILIA), 73–93 (TGVL…FLLL), and 98–118 (IALA…MAGG). Na(+)-binding residues include Gly77 and Thr80.

This sequence belongs to the fluoride channel Fluc/FEX (TC 1.A.43) family.

It is found in the cell inner membrane. It carries out the reaction fluoride(in) = fluoride(out). With respect to regulation, na(+) is not transported, but it plays an essential structural role and its presence is essential for fluoride channel function. Functionally, fluoride-specific ion channel. Important for reducing fluoride concentration in the cell, thus reducing its toxicity. This chain is Fluoride-specific ion channel FluC, found in Sulfurimonas denitrificans (strain ATCC 33889 / DSM 1251) (Thiomicrospira denitrificans (strain ATCC 33889 / DSM 1251)).